A 140-amino-acid chain; its full sequence is 3-hydroxyacyl-[acyl-carrier-protein] dehydratase FabZ (140 aa).

Residue His47 is part of the active site.

Belongs to the thioester dehydratase family. FabZ subfamily.

The protein localises to the cytoplasm. The enzyme catalyses a (3R)-hydroxyacyl-[ACP] = a (2E)-enoyl-[ACP] + H2O. Involved in unsaturated fatty acids biosynthesis. Catalyzes the dehydration of short chain beta-hydroxyacyl-ACPs and long chain saturated and unsaturated beta-hydroxyacyl-ACPs. In Streptococcus pyogenes serotype M49 (strain NZ131), this protein is 3-hydroxyacyl-[acyl-carrier-protein] dehydratase FabZ.